Reading from the N-terminus, the 97-residue chain is Putative membrane protein insertion efficiency factor (97 aa).

The interval 68–97 (VPGTELNTAPRSGQACNPTESTHSTTQTRH) is disordered. Over residues 72–97 (ELNTAPRSGQACNPTESTHSTTQTRH) the composition is skewed to polar residues.

It belongs to the UPF0161 family.

The protein localises to the cell inner membrane. In terms of biological role, could be involved in insertion of integral membrane proteins into the membrane. The polypeptide is Putative membrane protein insertion efficiency factor (Marinobacter nauticus (strain ATCC 700491 / DSM 11845 / VT8) (Marinobacter aquaeolei)).